The following is a 3971-amino-acid chain: MYTSQFQTLVDVIRNRSNISDRGIRFIESDKIETFVSYRQLFDEAQGFLGYLQHIGIQPKQEIVFQIQENKSFVVAFWACLLGGMIPVPVSIGEDNDHKLKVWRIWNILNNPFLLASETVLDKMKKFAADHDLQDFHHQLIEKSDIIQDRIYDHPASQYEPEADELAFIQFSSGSTGDPKGVMLTHHNLIHNTCAIRNALAIDLKDTLLSWMPLTHDMGLIACHLVPALAGINQNLMPTELFIRRPILWMKKAHEHKASILSSPNFGYNYFLKFLKDNKSYDWDLSHIRVIANGAEPILPELCDEFLTRCAAFNMKRSAILNVYGLAEASVGATFSNIGERFVPVYLHRDHLNLGERAVEVSKEDQNCASFVEVGKPIDYCQIRICNEANEGLEDGFIGHIQIKGENVTQGYYNNPESTNRALTPDGWVKTGDLGFIRKGNLVVTGREKDIIFVNGKNVYPHDIERVAIELEDIDLGRVAACGVYDQETRSREIVLFAVYKKSADRFAPLVKDIKKHLYQRGGWSIKEILPIRKLPKTTSGKVKRYELAEQYESGKFALESTKIKEFLEGHSTEPVQTPIHEIETALLSIFSEVMDGKKIHLNDHYFDMGATSLQLSQIAERIEQKFGCELTVADLFTYPSIADLAAFLVENHSEIKQTDTAKPSRSSSKDIAIIGMSLNVPGASNKSDFWHLLENGEHGIREYPAPRVKDAIDYLRSIKSERNEKQFVRGGYLDEIDRFDYSFFGLAPKTAKFMDPNQRLFLQSAWHAIEDAGYAGDTISGSQLGVYVGYSKVGYDYERLLSANYPEELHHYIVGNLPSVLASRIAYFLNLKGPAVTVDTACSSSLVAVHMACKALLTGDCEMALAGGIRTSLLPMRIGLDMESSDGLTKTFSKDSDGTGSGEGVAAVLLKPLQAAIRDGDHIYGVIKGSAINQDGTTVGITAPSPAAQTEVIEMAWKDAGIAPETLSFIEAHGTGTKLGDPVEFNGLCKAFEKVTEKKQFCAIGSVKANIGHLFEAAGIVGLIKSALMLNHKKIPPLAHFNKPNPLIPFHSSPFYVNQEVMDFTPEDRPLRGGISSFGFSGTNAHVVLEEYTPESEYAPEDGNDPHLFVLSAHTEASLYELTHQYRQYISDDSQSSLRSICYTASTGRAHLDYCLAMIVSSNQELIDKLTSLIQGERNLPQVHFGYKNIKEMQPAEKDNLSKQISDLMQHRPCTKDERITWLNRIAELYVQRAVIDWRAVYSNEVVQKTPLPLYPFERNRCWVEAVYESAKERKEKGEVALDINHTKTHIESFLKTVISNASGIRADEIDSNAHFIGFGLDSIMLTQVKKAIADEFNVDIPMERFFDTMNNIESVVDYLAENVPSAASTPPQESVTAQEELVISGAQPELEHQEHMLDKIIASQNQLIQQTLQAQLDSFNLLRNNSHFVSKESEISQDKTSLSPKSVTAKKNSAQEAKPYIPFQRQTLNEQVNYTPQQRQYLESFIEKYVDKTKGSKQYTDETRFAHANNRNLSSFRSYWKEMVYPIIAERSDGSRMWDIDGNEYIDITMGFGVNLFGHHPSFITQTVVDSTHSALPPLGPMSNVAGEVADRIRACTGVERVAFYNSGTEAVMVALRLARAATGRTKVVVFAGSYHGTFDGVLGVANTKGGAEPANPLAPGIPQSFMNDLIILHYNHPDSLDVIRNLGNELAAVLVEPVQSRRPDLQPESFLKELRAITQQSGTALIMDEIITGFRIGLGGAQEWFDIQADLVTYGKIIGGGQPLGIVAGKAEFMNTIDGGTWQYGDDSYPTDEAKRTFVAGTFNTHPLTMRMSLAVLRYLQAEGETLYERLNQKTTYLVDQLNSYFEQSQVPIRMVQFGSLFRFVSSVDNDLFFYHLNYKGVYVWEGRNCFLSTAHTSDDIAYIIQAVQETVKDLRRGGFIPEGPDSPNDGGHKEPETYELSPEQKQLAVVSQYGNDASAALNQSIMLKVKGAVQHTLLKQAVRNIVKRHDALRTVIHVDDEVQQVQARINVEIPIIDFTGYPNEQRESEVQKWLTEDAKRPFHFHEQKPLFRVHVLTSKQDEHLIVLTFHHIIADGWSIAVFVQELESTYAAIVQGSPLPSHEVVSFRQYLDWQQAQIENGHYEEGIRYWRQYLSEPIPQAILTSMSSSRYPHGYEGDRYTVTLDRPLSKAIKSLSIRMKNSVFATILGAFHLFLQQLTKQAGLVIGIPTAGQLHMKQPMLVGNCVNMVPVKNTASSESTLADYLGHMKENMDQVMRHQDVPMTLVASQLPHDQMPDMRIIFNLDRPFRKLHFGQMEAELIAYPIKCISYDLFLNVTEFDQEYVLDFDFNTSVISSEIMNKWGTGFVNLLKKMVEGDSASLDSLKMFSKEDQHDLLELYADHQLRISSTLDHKGVRAVYEEPENETELQIAQIWAELLGLEKVGRSDHFLSLGGNSLKATLMLSKIQQTFNQKVSIGQFFSHQTVKELANFIRGEKNVKYPPMKPVEQKAFYRTSPAQQRVYFLHQMEPNQVSQNMFGQISIIGKYDEKALIASLQQVMQRHEAFRTSFHIIDGEIVQQIAGELDFNVRVHSMDREEFEAYADGYVKPFRLEQAPLVRAELIKVDNEQAELLIDMHHIISDGYSMSILTNELFALYHGNPLPEIPFEYKDFAEWQNQLLIGEVMEQQEEYWLEQFKQEVPILQLPADGSRAMEWSSEGQRVTCSLQSSLIRSLQEMAQQKGTTLYMVLLAAYNVLLHKYTGQEDIVVGTPVSGRNQPNIESMIGIFIQTMGIRTKPQANKRFTDYLDEVKRQTLDAFENQDYPFDWLVEKVNVQRETTGKSLFNTMFVYQNIEFQEIHQDGCTFRVKERNPGVSLYDLMLTIEDAEKQLDIHFDFNPNQFEQETIEQIIRHYTSLLDSLVKEPEKSLSSVPMLSDIERHQLLMGCNDTETPFPHNDTVCQWFETQAEQRPDDEAVIFGNERCTYGQLNERVNQLARTLRTKGVQADQFVAIICPHRIELIVGILAVLKAGGAYVPIDPEYPEDRIQYMLKDSEAKIVLAQLDLHKHLTFDADVVLLDEESSYHEDRSNLEPTCGANDLAYMIYTSGSTGNPKGVLIEHRGLANYIEWAKEVYVNDEKTNFPLYSSISFDLTVTSIFTPLVTGNTIIVFDGEDKSAVLSTIMQDPRIDIIKLTPAHLHVLKEMKIADGTTIRKMIVGGENLSTRLAQSVSEQFKGQLDIFNEYGPTEAVVGCMIYRYDTKRDRREFVPIGSPAANTSIYVLDASMNLVPVGVPGEMYIGGAGVARGYWNRPDLTAEKFVHNPFAPGTIMYKTGDLAKRLRDGNLIYLGRIDEQVKIRGHRIELGEVEAAMHKVEAVQKAVVLAREEEDGLQQLCAYYVSNKPITIAEIREQLSLELPDYMVPSHYIQLEQLPLTSNGKINRKALPAPEVSLEQIAEYVPPGNEVESKLAVLWQEMLGIHRVGIKHNFFDLGGNSIRATALAARIHKELDVNLSVKDIFKFPTIEQLANMALRMEKIRYVSIPSAQKISYYPVSSAQKRMYLLSHTEGGELTYNMTGAMSVEGAIDLERLTAAFQKLIERHEVLRTSFELYEGEPAQRIHPSIEFTIEQIQAREEEVEDHVLDFIKSFDLAKPPLMRVGLIELTPEKHVLLVDMHHIISDGVSMNILMKDLNQFYKGIEPDPLPIQYKDYAVWQQTEAQRQNIKKQEAYWLNRFHDEIPVLDMPTDYERPAIRDYEGESFEFLIPIELKQRLSQMEEATGTTLYMILMAAYTILLSKYSGQEDIVVGTPVSGRSHMDVESVVGMFVNTLVIRNHPAGRKIFEDYLNEVKENMLNAYQNQDYPLEELIQHVHLLKDSSRNPLFDTMFVLQNLDQVELNLDSLRFTPYKLHHTVAKFDLTLSIQTDQDKHHGLFEYSKKLFKKSRIEALSKDYLHILSVISQQPSIQIEHIELSGSTAEDDNLIHSIELNF.

The interval 160–479 (EPEADELAFI…ELEDIDLGRV (320 aa)) is acyl-CoA ligase. The 76-residue stretch at 578-653 (TPIHEIETAL…DLAAFLVENH (76 aa)) folds into the Carrier 1 domain. Serine 613 is modified (O-(pantetheine 4'-phosphoryl)serine). The 424-residue stretch at 669 to 1092 (SKDIAIIGMS…GTNAHVVLEE (424 aa)) folds into the Ketosynthase family 3 (KS3) domain. Active-site for beta-ketoacyl synthase activity residues include cysteine 843, histidine 974, and histidine 1014. The Carrier 2 domain occupies 1290–1365 (THIESFLKTV…SVVDYLAENV (76 aa)). Serine 1324 carries the post-translational modification O-(pantetheine 4'-phosphoryl)serine. Residues 1434 to 1456 (ESEISQDKTSLSPKSVTAKKNSA) form a disordered region. The segment covering 1440–1456 (DKTSLSPKSVTAKKNSA) has biased composition (polar residues). Residues 1529 to 1856 (IIAERSDGSR…SYFEQSQVPI (328 aa)) form a GSA-AT region. Lysine 1759 carries the post-translational modification N6-(pyridoxal phosphate)lysine. The segment at 1921–1942 (GGFIPEGPDSPNDGGHKEPETY) is disordered. The tract at residues 1938 to 2240 (EPETYELSPE…NMVPVKNTAS (303 aa)) is condensation 1. The Carrier 3 domain occupies 2405–2480 (EPENETELQI…ELANFIRGEK (76 aa)). Serine 2440 is modified (O-(pantetheine 4'-phosphoryl)serine). Residues 2492-2781 (QKAFYRTSPA…QTMGIRTKPQ (290 aa)) form a condensation 2 region. The interval 2937 to 3823 (PHNDTVCQWF…RNHPAGRKIF (887 aa)) is domain 1 (asparagine-activating). The tract at residues 2967-3364 (TYGQLNERVN…KVEAVQKAVV (398 aa)) is adenylation 1. A Carrier 4 domain is found at 3442 to 3517 (PPGNEVESKL…QLANMALRME (76 aa)). At serine 3477 the chain carries O-(pantetheine 4'-phosphoryl)serine. The condensation 3 stretch occupies residues 3529-3818 (KISYYPVSSA…NTLVIRNHPA (290 aa)).

Belongs to the ATP-dependent AMP-binding enzyme family. The cofactor is pyridoxal 5'-phosphate. It depends on pantetheine 4'-phosphate as a cofactor.

In terms of biological role, this protein is a multifunctional enzyme, able to activate a long chain fatty acid and link it with the amino acid Asn as part of the synthesis of mycosubtilin. The activation sites consist of individual domains. This Bacillus subtilis protein is Mycosubtilin synthase subunit A (mycA).